Here is a 348-residue protein sequence, read N- to C-terminus: uncharacterized protein (348 aa).

The protein belongs to the Mu gp47/PBSX XkdT family.

This is an uncharacterized protein from Bacillus subtilis (strain 168).